The sequence spans 152 residues: Ribosomal RNA large subunit methyltransferase H (152 aa).

S-adenosyl-L-methionine-binding positions include L68, G100, and 119-124 (FGRMTW).

This sequence belongs to the RNA methyltransferase RlmH family. Homodimer.

It is found in the cytoplasm. It catalyses the reaction pseudouridine(1915) in 23S rRNA + S-adenosyl-L-methionine = N(3)-methylpseudouridine(1915) in 23S rRNA + S-adenosyl-L-homocysteine + H(+). Its function is as follows. Specifically methylates the pseudouridine at position 1915 (m3Psi1915) in 23S rRNA. This chain is Ribosomal RNA large subunit methyltransferase H, found in Paramagnetospirillum magneticum (strain ATCC 700264 / AMB-1) (Magnetospirillum magneticum).